The following is a 283-amino-acid chain: 4-hydroxy-3-methylbut-2-enyl diphosphate reductase (283 aa).

C12 contacts [4Fe-4S] cluster. Residues H40 and H72 each coordinate (2E)-4-hydroxy-3-methylbut-2-enyl diphosphate. Dimethylallyl diphosphate contacts are provided by H40 and H72. Residues H40 and H72 each coordinate isopentenyl diphosphate. C94 is a [4Fe-4S] cluster binding site. H122 lines the (2E)-4-hydroxy-3-methylbut-2-enyl diphosphate pocket. Residue H122 coordinates dimethylallyl diphosphate. Position 122 (H122) interacts with isopentenyl diphosphate. Catalysis depends on E124, which acts as the Proton donor. T160 is a (2E)-4-hydroxy-3-methylbut-2-enyl diphosphate binding site. A [4Fe-4S] cluster-binding site is contributed by C188. S216, N218, and S259 together coordinate (2E)-4-hydroxy-3-methylbut-2-enyl diphosphate. Positions 216, 218, and 259 each coordinate dimethylallyl diphosphate. Residues S216, N218, and S259 each contribute to the isopentenyl diphosphate site.

Belongs to the IspH family. [4Fe-4S] cluster is required as a cofactor.

The enzyme catalyses isopentenyl diphosphate + 2 oxidized [2Fe-2S]-[ferredoxin] + H2O = (2E)-4-hydroxy-3-methylbut-2-enyl diphosphate + 2 reduced [2Fe-2S]-[ferredoxin] + 2 H(+). It catalyses the reaction dimethylallyl diphosphate + 2 oxidized [2Fe-2S]-[ferredoxin] + H2O = (2E)-4-hydroxy-3-methylbut-2-enyl diphosphate + 2 reduced [2Fe-2S]-[ferredoxin] + 2 H(+). The protein operates within isoprenoid biosynthesis; dimethylallyl diphosphate biosynthesis; dimethylallyl diphosphate from (2E)-4-hydroxy-3-methylbutenyl diphosphate: step 1/1. It functions in the pathway isoprenoid biosynthesis; isopentenyl diphosphate biosynthesis via DXP pathway; isopentenyl diphosphate from 1-deoxy-D-xylulose 5-phosphate: step 6/6. Its function is as follows. Catalyzes the conversion of 1-hydroxy-2-methyl-2-(E)-butenyl 4-diphosphate (HMBPP) into a mixture of isopentenyl diphosphate (IPP) and dimethylallyl diphosphate (DMAPP). Acts in the terminal step of the DOXP/MEP pathway for isoprenoid precursor biosynthesis. This Dictyoglomus thermophilum (strain ATCC 35947 / DSM 3960 / H-6-12) protein is 4-hydroxy-3-methylbut-2-enyl diphosphate reductase.